Consider the following 499-residue polypeptide: Replication factor C large subunit (499 aa).

50–57 (GPPGVGKT) is a binding site for ATP. The interval 428-499 (EAERRVEAAE…QATLFDFLKK (72 aa)) is disordered. Over residues 436 to 472 (AEEEETMEAGEPEEELEEVEEEELTEEELEEAEEEIE) the composition is skewed to acidic residues. Residues 473 to 484 (TVGKKEKPEKEK) are compositionally biased toward basic and acidic residues.

It belongs to the activator 1 small subunits family. RfcL subfamily. In terms of assembly, heteromultimer composed of small subunits (RfcS) and large subunits (RfcL).

Functionally, part of the RFC clamp loader complex which loads the PCNA sliding clamp onto DNA. This is Replication factor C large subunit from Thermococcus kodakarensis (strain ATCC BAA-918 / JCM 12380 / KOD1) (Pyrococcus kodakaraensis (strain KOD1)).